A 529-amino-acid polypeptide reads, in one-letter code: DNA-binding protein (529 aa).

A compositionally biased stretch (basic and acidic residues) spans 1-17 (MASREEEQRETTPERGR). Disordered stretches follow at residues 1 to 108 (MASR…VDSE) and 125 to 168 (PVLI…SEST). Residues 129–139 (KHGKGGKRTVR) show a composition bias toward basic residues. The span at 140–155 (RLNEDDPVARGMRTQE) shows a compositional bias: basic and acidic residues. Positions 156–165 (EKEESSEAES) are enriched in acidic residues. At Tyr195 the chain carries Phosphotyrosine; by host. Zn(2+)-binding residues include Cys284 and His286. The interval 297 to 331 (IEMDVTSENGQRALKEQSSKAKIVKNRWGRNVVQI) is flexible loop. Residues Cys339, Cys355, Cys396, Cys398, Cys450, and Cys467 each coordinate Zn(2+). Residues 513–529 (VSLPVAHSDARQNPFDF) are C-terminal arm, DBP binding.

The protein belongs to the adenoviridae E2A DNA-binding protein family. Homomultimerizes on viral ssDNA bound to pTP. Forms an initiation complex with viral polymerase, pTP and hosts NFIA and POU2F1/OCT1. Interacts with host SRCAP.

Its subcellular location is the host nucleus. Plays a role in the elongation phase of viral strand displacement replication by unwinding the template in an ATP-independent fashion, employing its capacity to form multimers. Also enhances the rate of initiation. Released from template upon second strand synthesis. Assembles in complex with viral pTP, viral pol, host NFIA and host POU2F1/OCT1 on viral origin of replication. Covers the whole ssDNA genome during synthesis. The complementary strand synthesis induces its release from DNA template. May inhibit cellular transcription mediated by the interaction between host SRCAP and CBP. The polypeptide is DNA-binding protein (Human adenovirus C serotype 2 (HAdV-2)).